A 390-amino-acid chain; its full sequence is Succinate--CoA ligase [ADP-forming] subunit beta (390 aa).

An ATP-grasp domain is found at 9-245; sequence KHLLKKYNIP…TTQEDEHETM (237 aa). ATP contacts are provided by residues K46, 53–55, E99, S102, and E107; that span reads GRG. 2 residues coordinate Mg(2+): N200 and D214. Substrate contacts are provided by residues N265 and 322–324; that span reads GIV.

The protein belongs to the succinate/malate CoA ligase beta subunit family. As to quaternary structure, heterotetramer of two alpha and two beta subunits. Requires Mg(2+) as cofactor.

It carries out the reaction succinate + ATP + CoA = succinyl-CoA + ADP + phosphate. The enzyme catalyses GTP + succinate + CoA = succinyl-CoA + GDP + phosphate. The protein operates within carbohydrate metabolism; tricarboxylic acid cycle; succinate from succinyl-CoA (ligase route): step 1/1. In terms of biological role, succinyl-CoA synthetase functions in the citric acid cycle (TCA), coupling the hydrolysis of succinyl-CoA to the synthesis of either ATP or GTP and thus represents the only step of substrate-level phosphorylation in the TCA. The beta subunit provides nucleotide specificity of the enzyme and binds the substrate succinate, while the binding sites for coenzyme A and phosphate are found in the alpha subunit. This chain is Succinate--CoA ligase [ADP-forming] subunit beta, found in Coxiella burnetii (strain Dugway 5J108-111).